The chain runs to 149 residues: Large ribosomal subunit protein bL9 (149 aa).

Belongs to the bacterial ribosomal protein bL9 family.

Binds to the 23S rRNA. This Helicobacter pylori (strain ATCC 700392 / 26695) (Campylobacter pylori) protein is Large ribosomal subunit protein bL9.